A 217-amino-acid polypeptide reads, in one-letter code: Thiamine-phosphate synthase (217 aa).

Residues 42-46 (QFRDK) and Asp-77 contribute to the 4-amino-2-methyl-5-(diphosphooxymethyl)pyrimidine site. Mg(2+) is bound by residues Asp-78 and Asp-97. Ser-117 is a 4-amino-2-methyl-5-(diphosphooxymethyl)pyrimidine binding site. 2-[(2R,5Z)-2-carboxy-4-methylthiazol-5(2H)-ylidene]ethyl phosphate is bound at residue 144 to 146 (TIS). Residue Lys-147 participates in 4-amino-2-methyl-5-(diphosphooxymethyl)pyrimidine binding. 2-[(2R,5Z)-2-carboxy-4-methylthiazol-5(2H)-ylidene]ethyl phosphate is bound by residues Gly-175 and 195–196 (IT).

Belongs to the thiamine-phosphate synthase family. It depends on Mg(2+) as a cofactor.

The catalysed reaction is 2-[(2R,5Z)-2-carboxy-4-methylthiazol-5(2H)-ylidene]ethyl phosphate + 4-amino-2-methyl-5-(diphosphooxymethyl)pyrimidine + 2 H(+) = thiamine phosphate + CO2 + diphosphate. It catalyses the reaction 2-(2-carboxy-4-methylthiazol-5-yl)ethyl phosphate + 4-amino-2-methyl-5-(diphosphooxymethyl)pyrimidine + 2 H(+) = thiamine phosphate + CO2 + diphosphate. It carries out the reaction 4-methyl-5-(2-phosphooxyethyl)-thiazole + 4-amino-2-methyl-5-(diphosphooxymethyl)pyrimidine + H(+) = thiamine phosphate + diphosphate. It functions in the pathway cofactor biosynthesis; thiamine diphosphate biosynthesis; thiamine phosphate from 4-amino-2-methyl-5-diphosphomethylpyrimidine and 4-methyl-5-(2-phosphoethyl)-thiazole: step 1/1. In terms of biological role, condenses 4-methyl-5-(beta-hydroxyethyl)thiazole monophosphate (THZ-P) and 2-methyl-4-amino-5-hydroxymethyl pyrimidine pyrophosphate (HMP-PP) to form thiamine monophosphate (TMP). The chain is Thiamine-phosphate synthase from Levilactobacillus brevis (strain ATCC 367 / BCRC 12310 / CIP 105137 / JCM 1170 / LMG 11437 / NCIMB 947 / NCTC 947) (Lactobacillus brevis).